The chain runs to 575 residues: Sodium/calcium exchanger NCL2 (575 aa).

Helical transmembrane passes span 69–89, 112–132, and 146–166; these read FLPC…YGFL, IVGG…LILV, and VLIG…LLWG. The N-linked (GlcNAc...) asparagine glycan is linked to N179. 2 consecutive transmembrane segments (helical) span residues 210-230 and 237-257; these read IMAI…FKLH and VLIG…YQVF. 2 EF-hand domains span residues 297–332 and 337–372; these read PNVS…INFE and NSNL…WLDE. N-linked (GlcNAc...) asparagine glycosylation occurs at N298. Ca(2+)-binding residues include D310, D312, D314, K316, E321, D350, S352, N354, and E361. The next 5 membrane-spanning stretches (helical) occupy residues 417–437, 457–477, 494–514, 522–542, and 548–568; these read WTCI…AASA, FISF…SAII, VYGG…ALVY, FSSE…FTSF, and LWTC…VYIL.

The protein belongs to the Ca(2+):cation antiporter (CaCA) (TC 2.A.19) family.

The protein localises to the cell membrane. Functionally, may function as a sodium/calcium exchanger (NCX) and participate in the maintenance of calcium homeostasis. May play a role abiotic stress responses. This Oryza sativa subsp. japonica (Rice) protein is Sodium/calcium exchanger NCL2.